A 37-amino-acid chain; its full sequence is MKVRASVKKMCEKCRVIRRHGRVMVICSNPKHKQRQG.

This sequence belongs to the bacterial ribosomal protein bL36 family.

The sequence is that of Large ribosomal subunit protein bL36 from Prochlorococcus marinus (strain MIT 9303).